The chain runs to 1038 residues: Protein transport protein SEC24 A (1038 aa).

Residues 1–247 form a disordered region; sequence MGTENQGYPN…PPHTGGFAQR (247 aa). Positions 22-33 are enriched in pro residues; it reads SAPPPGIPPQSG. Cys-371, Cys-374, Cys-393, and Cys-396 together coordinate Zn(2+). The segment at 371–396 is zinc finger-like; it reads CRRCRTYVNPFVTFTDSGRKWRCNIC.

The protein belongs to the SEC23/SEC24 family. SEC24 subfamily. In terms of assembly, component of the coat protein complex II (COPII), composed of at least five proteins: the Sec23/24 complex, the Sec13/31 complex and Sar1. Interacts with SEC221, SEC23E/SEC23A, SEC23B, SEC23G/SEC23C and SEC23F/SEC23D. (Microbial infection) Interacts with turnip mosaic virus (TuMV) 6K2 in COPII-coated vesicles. In terms of tissue distribution, mainly expressed in pollen, leaves, inflorescences, roots and stems, and, to a lower extent, in cotyledons, petioles and hypocotyls.

It is found in the cytoplasmic vesicle. The protein localises to the COPII-coated vesicle membrane. The protein resides in the endoplasmic reticulum membrane. It localises to the golgi apparatus membrane. Its subcellular location is the cytoplasm. It is found in the cytosol. Functionally, essential protein. Component of the coat protein complex II (COPII), that covers ER-derived vesicles involved in transport from the endoplasmic reticulum to the Golgi apparatus. COPII is composed of at least five proteins: the SEC23/24 complex, the SEC13/31 complex, and the protein SAR1. Acts in the cytoplasm to promote the transport of secretory, plasma membrane, and vacuolar proteins from the endoplasmic reticulum to the Golgi complex. Involved in maintaining the dynamic identity of organelles of the early secretory pathway. Regulates cell size patterning, and prevents CDKA;1-, DEK1- and ACR4-dependent endoreduplication and giant cells formation in sepals. Required for male gametophytes (pollen grains) development and transmission. Its function is as follows. (Microbial infection) Contributes to viral systemic infection of turnip mosaic virus (TuMV) by triggering the formation of host endoplasmic reticulum (ER)-derived viral vesicles that carry the viral RNA (vRNA) to plasmodesmata for cell-to-cell viral movement. In Arabidopsis thaliana (Mouse-ear cress), this protein is Protein transport protein SEC24 A.